A 353-amino-acid chain; its full sequence is MNGTEGPFFYVPMLNTTGIVRSPYDYPQYYLVNPAAYAALGAYMFLLILLGFPINFLTLYVTIEHKKLRTPLNYILLNLAVANLFMVFGGFTTTMYTSMHGYFVLGRLGCNLEGFFATLGGEIGLWSLVVLAIERWMVVCKPISNFRFGENHAIMGLAFTWIMACACAVPPLVGWSRYIPEGMQCSCGVDYYTRAEGFNNESFVVYMFICHFLIPMAVVFFCYGRLLCAVKEAAAAQQESETTQRAEREVTRMVVIMVVAFLICWLPYAGVAWWIFTHQGSEFGPVFMTIPAFFAKSSSIYNPLIYICMNKQFRHCMITTLCCGKNPFEEEEGASTTSKTEASSVSSSSVSPA.

Residues 1–36 (MNGTEGPFFYVPMLNTTGIVRSPYDYPQYYLVNPAA) are Extracellular-facing. 2 N-linked (GlcNAc...) asparagine glycosylation sites follow: asparagine 2 and asparagine 15. Residues 37–61 (YAALGAYMFLLILLGFPINFLTLYV) form a helical membrane-spanning segment. Residues 62–73 (TIEHKKLRTPLN) are Cytoplasmic-facing. The chain crosses the membrane as a helical span at residues 74-96 (YILLNLAVANLFMVFGGFTTTMY). Residues 97–110 (TSMHGYFVLGRLGC) are Extracellular-facing. Cysteine 110 and cysteine 187 are disulfide-bonded. Residues 111–133 (NLEGFFATLGGEIGLWSLVVLAI) traverse the membrane as a helical segment. The short motif at 134–136 (ERW) is the 'Ionic lock' involved in activated form stabilization element. The Cytoplasmic portion of the chain corresponds to 134 to 152 (ERWMVVCKPISNFRFGENH). Residues 153-173 (AIMGLAFTWIMACACAVPPLV) form a helical membrane-spanning segment. Residues 174–202 (GWSRYIPEGMQCSCGVDYYTRAEGFNNES) lie on the Extracellular side of the membrane. An N-linked (GlcNAc...) asparagine glycan is attached at asparagine 200. A helical transmembrane segment spans residues 203–224 (FVVYMFICHFLIPMAVVFFCYG). Topologically, residues 225–252 (RLLCAVKEAAAAQQESETTQRAEREVTR) are cytoplasmic. The chain crosses the membrane as a helical span at residues 253 to 274 (MVVIMVVAFLICWLPYAGVAWW). Residues 275–286 (IFTHQGSEFGPV) are Extracellular-facing. A helical transmembrane segment spans residues 287-308 (FMTIPAFFAKSSSIYNPLIYIC). Residue lysine 296 is modified to N6-(retinylidene)lysine. Over 309 to 353 (MNKQFRHCMITTLCCGKNPFEEEEGASTTSKTEASSVSSSSVSPA) the chain is Cytoplasmic. 2 S-palmitoyl cysteine lipidation sites follow: cysteine 322 and cysteine 323. The disordered stretch occupies residues 330-353 (EEEGASTTSKTEASSVSSSSVSPA). The segment covering 334 to 353 (ASTTSKTEASSVSSSSVSPA) has biased composition (low complexity).

Belongs to the G-protein coupled receptor 1 family. Opsin subfamily. Post-translationally, phosphorylated on some or all of the serine and threonine residues present in the C-terminal region. In terms of processing, contains one covalently linked retinal chromophore.

The protein resides in the membrane. The protein localises to the cell projection. Its subcellular location is the cilium. It is found in the photoreceptor outer segment. Photoreceptor required for image-forming vision at low light intensity. While most salt water fish species use retinal as chromophore, most freshwater fish use 3-dehydroretinal, or a mixture of retinal and 3-dehydroretinal. Light-induced isomerization of 11-cis to all-trans retinal triggers a conformational change that activates signaling via G-proteins. Subsequent receptor phosphorylation mediates displacement of the bound G-protein alpha subunit by arrestin and terminates signaling. This chain is Rhodopsin (rho), found in Tetraodon nigroviridis (Spotted green pufferfish).